Reading from the N-terminus, the 368-residue chain is Polynucleotide 5'-hydroxyl-kinase NOL9 (368 aa).

36–43 (GPKNSGKS) provides a ligand contact to ATP.

It belongs to the Clp1 family. NOL9/GRC3 subfamily.

It localises to the nucleus. Its subcellular location is the nucleolus. In terms of biological role, polynucleotide 5'-kinase involved in rRNA processing. This is Polynucleotide 5'-hydroxyl-kinase NOL9 from Arabidopsis thaliana (Mouse-ear cress).